The chain runs to 2715 residues: Teneurin-3 (2715 aa).

Disordered stretches follow at residues 1 to 38 (MDVK…VPTQ) and 142 to 223 (GRSS…AALP). In terms of domain architecture, Teneurin N-terminal spans 1–309 (MDVKERRPYC…KSSKYCSWRC (309 aa)). Residues 1-310 (MDVKERRPYC…SSKYCSWRCT (310 aa)) are Cytoplasmic-facing. Residues 142–153 (GRSSCLSSRSNS) are compositionally biased toward low complexity. Over residues 159–168 (DTEHENRSDS) the composition is skewed to basic and acidic residues. Over residues 171 to 182 (EQPSNNPGQPTL) the composition is skewed to polar residues. The span at 201 to 213 (TSLNRNSLTNRRN) shows a compositional bias: low complexity. A helical membrane pass occupies residues 311–331 (ALCAVGVSVLLAILLSYFIAM). Over 332 to 2715 (HLFGLNWHLQ…FLRQSEIGKR (2384 aa)) the chain is Extracellular. 3 N-linked (GlcNAc...) asparagine glycosylation sites follow: N345, N380, and N419. 8 EGF-like domains span residues 514-545 (SVVE…PDCS), 546-576 (RAAC…TECD), 578-610 (PTTQ…ENCE), 611-642 (EADC…SNCE), 644-677 (LKTM…PDCS), 678-709 (NEIC…ACNQ), 710-739 (RACH…EHCT), and 740-783 (IAHY…AGCD). Cystine bridges form between C518–C528, C522–C533, C535–C544, C553–C564, C566–C575, C582–C593, C587–C598, C600–C609, C614–C625, C619–C630, C632–C641, C652–C665, C667–C676, C681–C691, C685–C696, C698–C707, C712–C722, C716–C727, C729–C738, C752–C762, C756–C771, and C773–C782. N670 carries N-linked (GlcNAc...) asparagine glycosylation. N869 and N892 each carry an N-linked (GlcNAc...) asparagine glycan. The NHL 1 repeat unit spans residues 1181-1209 (LLAPVALACGIDGSLYVGDFNYVRRIFPS). N1211 is a glycosylation site (N-linked (GlcNAc...) asparagine). NHL repeat units lie at residues 1216-1260 (LELR…PKSL), 1286-1330 (ARCG…NGII), 1347-1387 (CDTS…ITEN), 1418-1445 (LESA…INRI), and 1474-1517 (CYQS…VSKN). One copy of the YD 1 repeat lies at 1527–1546 (YEVASPTDQELYIFDINGTH). 2 N-linked (GlcNAc...) asparagine glycosylation sites follow: N1543 and N1560. YD repeat units lie at residues 1563 to 1583 (YSND…LRIR), 1626 to 1645 (YHGN…WTTF), and 1646 to 1668 (FDYD…TNLH). N1656, N1693, N1751, and N1836 each carry an N-linked (GlcNAc...) asparagine glycan. 18 YD repeats span residues 1839 to 1858 (YSST…EKVD), 1880 to 1898 (YLEK…YIFE), 1899 to 1919 (YDMW…HTMQ), 1926 to 1943 (YYRN…IITD), 1944 to 1965 (YNEE…VLFK), 1966 to 1983 (YRRQ…TRVS), 1986 to 2006 (YDET…FICT), 2009 to 2029 (YRQI…DGMV), 2037 to 2056 (YDNS…TPLP), 2062 to 2079 (FDDI…GVIY), 2080 to 2106 (YDIN…IKEI), 2108 to 2121 (YEIF…ITIQ), 2122 to 2145 (YDNM…TKYA), 2148 to 2168 (YDVD…WRYN), 2169 to 2189 (YDLN…LTPL), 2191 to 2211 (YDLR…DEDG), 2223 to 2243 (YSSK…TVIY), and 2245 to 2265 (YDGL…LQFF). A glycan (N-linked (GlcNAc...) asparagine) is linked at N1937. N-linked (GlcNAc...) asparagine glycosylation occurs at N2140. N-linked (GlcNAc...) asparagine glycosylation is present at N2280. The YD 23 repeat unit spans residues 2291–2332 (YDLQGHLFAMEISSGDEFYIASDNTGTPLAVFSSNGLMLKQT). N-linked (GlcNAc...) asparagine glycosylation is present at N2592.

This sequence belongs to the tenascin family. Teneurin subfamily. As to quaternary structure, homodimer; disulfide-linked; to mediate homophilic cell adhesion. Most isoforms (isoform-type A and type-B) can mediate homophilic interaction. Heterodimer with either TENM1 or TENM2. May also form heterodimer with TENM4. Isoform A0B0: Does not form homodimer to mediate homophilic cell adhesion. Isoform A0B0: Heterodimer with ADGRL3. In brain, expressed in highly specific regions of the postnatal brain: expressed in restricted domains of the developing hippocampal region, including proximal CA1, distal subiculum, and medial entorhinal cortex (at protein level). Expression matches with topographic connectivity between entorhinal cortex, CA1, and subiculum (at protein level). Also specifically expressed in subregions of the presubiculum, parasubiculum, medial mammillary nucleus and anteroventral thalamic nucleus that are topographically connected with subiculum or entorhinal cortex (at protein level). Expressed in neurons of the developing visual pathway (at protein level). Expressed in the dorsal and ventral lateral geniculate nucleus (dLGN and vLGN) and optic tract at birth. Expressed in ipsilateral retinal axons of terminal zones (TZs) in the developing superior colliculus (SC) throughout the first postnatal week. Expressed in the layer V of the visual caudal cortex. Expressed in the femoral and mandibular condylar cartilages. Strongly expressed in fibrous and proliferating chondrocytes. Poorly expressed in mature chondrocytes. Not expressed in hypertrophic chondrocytes.

It localises to the cell membrane. Its subcellular location is the cell projection. It is found in the axon. Functionally, involved in neural development by regulating the establishment of proper connectivity within the nervous system. Acts in both pre- and postsynaptic neurons in the hippocampus to control the assembly of a precise topographic projection: required in both CA1 and subicular neurons for the precise targeting of proximal CA1 axons to distal subiculum, probably by promoting homophilic cell adhesion. Promotes homophilic adhesion in a splicing isoform-dependent manner: most isoforms (isoform-type A and type-B) can mediate homophilic interaction. Promotes axon guidance. Required for proper dendrite morphogenesis and axon targeting in the vertebrate visual system, thereby playing a key role in the development of the visual pathway. Regulates the formation in ipsilateral retinal mapping to both the dorsal lateral geniculate nucleus (dLGN) and the superior colliculus (SC). May also be involved in the differentiation of the fibroblast-like cells in the superficial layer of mandibular condylar cartilage into chondrocytes. This chain is Teneurin-3, found in Mus musculus (Mouse).